A 158-amino-acid polypeptide reads, in one-letter code: Pleckstrin homology domain-containing family J member 1 (158 aa).

Residues 15–108 (PTQRAAELGM…WIDAIIKASY (94 aa)) form the PH domain.

This chain is Pleckstrin homology domain-containing family J member 1 (plekhj1), found in Danio rerio (Zebrafish).